A 261-amino-acid chain; its full sequence is Ribonuclease 3 (261 aa).

In terms of domain architecture, RNase III spans Tyr-20–Gly-144. Glu-62 lines the Mg(2+) pocket. The active site involves Asp-66. Mg(2+) contacts are provided by Asn-130 and Glu-133. Residue Glu-133 is part of the active site. A DRBM domain is found at Asn-172–Thr-241.

This sequence belongs to the ribonuclease III family. In terms of assembly, homodimer. Requires Mg(2+) as cofactor.

Its subcellular location is the cytoplasm. The catalysed reaction is Endonucleolytic cleavage to 5'-phosphomonoester.. Digests double-stranded RNA. Involved in the processing of primary rRNA transcript to yield the immediate precursors to the large and small rRNAs (23S and 16S). Processes some mRNAs, and tRNAs when they are encoded in the rRNA operon. Processes pre-crRNA and tracrRNA of type II CRISPR loci if present in the organism. This chain is Ribonuclease 3, found in Azobacteroides pseudotrichonymphae genomovar. CFP2.